Consider the following 165-residue polypeptide: Transmembrane protein 253 (165 aa).

3 consecutive transmembrane segments (helical) span residues 31–51 (LVLAVSQLWLAVAVVPFAVSV), 60–80 (MTTALPLGPGILGLLTGIVTL), and 91–111 (LAGLLVLELSAEAFTLGGVLV). The interval 145 to 165 (EEVPELETGPTVASTAKRTNQ) is disordered. The span at 155–165 (TVASTAKRTNQ) shows a compositional bias: polar residues.

It localises to the membrane. In Bos taurus (Bovine), this protein is Transmembrane protein 253 (TMEM253).